Reading from the N-terminus, the 210-residue chain is MSEQAVKVTNINNWVLGLTGGIGCGKTAVSNMLEALGICVVDADIIARQVVEPGSEGLKAIVTHFGADILLADGNLNRSALRELVFSNNEHKNWLNTLLHPLIRQQIIIDLNNATSPYVVLVAPLLFENGLDKYCNRTLLIDVPKNVQIERTVKRDNISLEQVNSIIAAQMSREQKQQQADDILNNDRSLTLVKHDLIALHKGYLKLALK.

One can recognise a DPCK domain in the interval 15–210 (VLGLTGGIGC…HKGYLKLALK (196 aa)). Residue 23–28 (GCGKTA) participates in ATP binding.

This sequence belongs to the CoaE family.

The protein localises to the cytoplasm. It carries out the reaction 3'-dephospho-CoA + ATP = ADP + CoA + H(+). It participates in cofactor biosynthesis; coenzyme A biosynthesis; CoA from (R)-pantothenate: step 5/5. Its function is as follows. Catalyzes the phosphorylation of the 3'-hydroxyl group of dephosphocoenzyme A to form coenzyme A. This Pseudoalteromonas translucida (strain TAC 125) protein is Dephospho-CoA kinase.